Here is a 670-residue protein sequence, read N- to C-terminus: Transketolase, chromosomal (670 aa).

A substrate-binding site is contributed by H32. Thiamine diphosphate is bound by residues H72 and 120–122 (GPL). D161 provides a ligand contact to Mg(2+). Positions 162 and 191 each coordinate thiamine diphosphate. Mg(2+) is bound by residues N191 and I193. Substrate-binding residues include H267, R364, and S391. Position 267 (H267) interacts with thiamine diphosphate. The active-site Proton donor is the E417. Position 443 (F443) interacts with thiamine diphosphate. Residues H467, D475, and R526 each contribute to the substrate site.

The protein belongs to the transketolase family. Homodimer. The cofactor is Mg(2+). Ca(2+) is required as a cofactor. It depends on Mn(2+) as a cofactor. Co(2+) serves as cofactor. Requires thiamine diphosphate as cofactor.

The catalysed reaction is D-sedoheptulose 7-phosphate + D-glyceraldehyde 3-phosphate = aldehydo-D-ribose 5-phosphate + D-xylulose 5-phosphate. It functions in the pathway carbohydrate biosynthesis; Calvin cycle. In terms of biological role, catalyzes the transfer of a two-carbon ketol group from a ketose donor to an aldose acceptor, via a covalent intermediate with the cofactor thiamine pyrophosphate. This Cupriavidus necator (strain ATCC 17699 / DSM 428 / KCTC 22496 / NCIMB 10442 / H16 / Stanier 337) (Ralstonia eutropha) protein is Transketolase, chromosomal (cbbTC).